Reading from the N-terminus, the 274-residue chain is NH(3)-dependent NAD(+) synthetase (274 aa).

46–53 (GISGGQDS) provides a ligand contact to ATP. A Mg(2+)-binding site is contributed by aspartate 52. Arginine 140 serves as a coordination point for deamido-NAD(+). Residue threonine 160 participates in ATP binding. Glutamate 165 lines the Mg(2+) pocket. Positions 173 and 180 each coordinate deamido-NAD(+). ATP contacts are provided by lysine 189 and threonine 211. Residue 260-261 (HK) coordinates deamido-NAD(+).

This sequence belongs to the NAD synthetase family. As to quaternary structure, homodimer.

The enzyme catalyses deamido-NAD(+) + NH4(+) + ATP = AMP + diphosphate + NAD(+) + H(+). The protein operates within cofactor biosynthesis; NAD(+) biosynthesis; NAD(+) from deamido-NAD(+) (ammonia route): step 1/1. Its function is as follows. Catalyzes the ATP-dependent amidation of deamido-NAD to form NAD. Uses ammonia as a nitrogen source. In Sodalis glossinidius (strain morsitans), this protein is NH(3)-dependent NAD(+) synthetase.